A 225-amino-acid polypeptide reads, in one-letter code: NAD(P)H-quinone oxidoreductase subunit K, chloroplastic (225 aa).

Residues C43, C44, C108, and C139 each contribute to the [4Fe-4S] cluster site.

Belongs to the complex I 20 kDa subunit family. As to quaternary structure, NDH is composed of at least 16 different subunits, 5 of which are encoded in the nucleus. [4Fe-4S] cluster is required as a cofactor.

It localises to the plastid. The protein localises to the chloroplast thylakoid membrane. The catalysed reaction is a plastoquinone + NADH + (n+1) H(+)(in) = a plastoquinol + NAD(+) + n H(+)(out). The enzyme catalyses a plastoquinone + NADPH + (n+1) H(+)(in) = a plastoquinol + NADP(+) + n H(+)(out). Functionally, NDH shuttles electrons from NAD(P)H:plastoquinone, via FMN and iron-sulfur (Fe-S) centers, to quinones in the photosynthetic chain and possibly in a chloroplast respiratory chain. The immediate electron acceptor for the enzyme in this species is believed to be plastoquinone. Couples the redox reaction to proton translocation, and thus conserves the redox energy in a proton gradient. The polypeptide is NAD(P)H-quinone oxidoreductase subunit K, chloroplastic (Nasturtium officinale (Watercress)).